Here is a 348-residue protein sequence, read N- to C-terminus: Dihydroorotase (348 aa).

Zn(2+)-binding residues include histidine 17 and histidine 19. Substrate-binding positions include 19–21 (HLR) and asparagine 45. Lysine 103, histidine 140, and histidine 178 together coordinate Zn(2+). Position 103 is an N6-carboxylysine (lysine 103). Histidine 140 serves as a coordination point for substrate. Leucine 223 provides a ligand contact to substrate. Aspartate 251 contacts Zn(2+). Aspartate 251 is a catalytic residue. Substrate contacts are provided by histidine 255 and alanine 267.

This sequence belongs to the metallo-dependent hydrolases superfamily. DHOase family. Class II DHOase subfamily. As to quaternary structure, homodimer. Requires Zn(2+) as cofactor.

It catalyses the reaction (S)-dihydroorotate + H2O = N-carbamoyl-L-aspartate + H(+). It functions in the pathway pyrimidine metabolism; UMP biosynthesis via de novo pathway; (S)-dihydroorotate from bicarbonate: step 3/3. Functionally, catalyzes the reversible cyclization of carbamoyl aspartate to dihydroorotate. The chain is Dihydroorotase from Salmonella arizonae (strain ATCC BAA-731 / CDC346-86 / RSK2980).